Consider the following 316-residue polypeptide: 4-hydroxyphenylacetate decarboxylase activating enzyme (316 aa).

Residues 20 to 307 enclose the Radical SAM core domain; that stretch reads HDGPGCRTTV…QDIFLDNGIA (288 aa). Residues Cys-34, Cys-38, Cys-41, Cys-60, Cys-66, Cys-69, and Cys-105 each contribute to the [4Fe-4S] cluster site. 40–42 is an S-adenosyl-L-methionine binding site; it reads WCA. One can recognise a 4Fe-4S ferredoxin-type domain in the interval 84-115; sequence NKPVIDWNICKDCESFECVNSCYYNAFKLCAK. Residues Gly-144, 193–195, and His-267 contribute to the S-adenosyl-L-methionine site; that span reads DIK.

It belongs to the organic radical-activating enzymes family. As to quaternary structure, monomer. The cofactor is [4Fe-4S] cluster.

The enzyme catalyses glycyl-[protein] + reduced [flavodoxin] + S-adenosyl-L-methionine = glycin-2-yl radical-[protein] + semiquinone [flavodoxin] + 5'-deoxyadenosine + L-methionine + H(+). Its function is as follows. Catalyzes activation of 4-hydroxyphenylacetate decarboxylase under anaerobic conditions by generation of an organic free radical on a glycine residue, via a homolytic cleavage of S-adenosyl-L-methionine (SAM). This chain is 4-hydroxyphenylacetate decarboxylase activating enzyme, found in Clostridioides difficile (Peptoclostridium difficile).